Here is a 354-residue protein sequence, read N- to C-terminus: mRNA cap guanine-N(7) methyltransferase 2 (354 aa).

Residues Lys8 to Pro286 form the mRNA cap 0 methyltransferase domain. S-adenosyl-L-methionine-binding positions include Lys21, Asp61, and Asp88–Pro89.

This sequence belongs to the class I-like SAM-binding methyltransferase superfamily. mRNA cap 0 methyltransferase family.

The protein resides in the nucleus. It catalyses the reaction a 5'-end (5'-triphosphoguanosine)-ribonucleoside in mRNA + S-adenosyl-L-methionine = a 5'-end (N(7)-methyl 5'-triphosphoguanosine)-ribonucleoside in mRNA + S-adenosyl-L-homocysteine. Its function is as follows. mRNA capping methyltransferase that methylates the N7 position of the added guanosine to the 5'-cap structure of mRNAs. Binds RNA containing 5'-terminal GpppC. In Arabidopsis thaliana (Mouse-ear cress), this protein is mRNA cap guanine-N(7) methyltransferase 2.